The chain runs to 356 residues: S-adenosylmethionine:tRNA ribosyltransferase-isomerase (356 aa).

It belongs to the QueA family. Monomer.

It localises to the cytoplasm. It catalyses the reaction 7-aminomethyl-7-carbaguanosine(34) in tRNA + S-adenosyl-L-methionine = epoxyqueuosine(34) in tRNA + adenine + L-methionine + 2 H(+). The protein operates within tRNA modification; tRNA-queuosine biosynthesis. Functionally, transfers and isomerizes the ribose moiety from AdoMet to the 7-aminomethyl group of 7-deazaguanine (preQ1-tRNA) to give epoxyqueuosine (oQ-tRNA). The sequence is that of S-adenosylmethionine:tRNA ribosyltransferase-isomerase from Cronobacter sakazakii (strain ATCC BAA-894) (Enterobacter sakazakii).